Consider the following 285-residue polypeptide: Pantothenate synthetase (285 aa).

30 to 37 (MGNLHDGH) contacts ATP. Residue H37 is the Proton donor of the active site. (R)-pantoate is bound at residue Q61. Q61 lines the beta-alanine pocket. 149-152 (GEKD) is an ATP binding site. Residue Q155 coordinates (R)-pantoate. ATP contacts are provided by residues I178 and 186 to 189 (LSSR).

Belongs to the pantothenate synthetase family. As to quaternary structure, homodimer.

Its subcellular location is the cytoplasm. It catalyses the reaction (R)-pantoate + beta-alanine + ATP = (R)-pantothenate + AMP + diphosphate + H(+). It functions in the pathway cofactor biosynthesis; (R)-pantothenate biosynthesis; (R)-pantothenate from (R)-pantoate and beta-alanine: step 1/1. Functionally, catalyzes the condensation of pantoate with beta-alanine in an ATP-dependent reaction via a pantoyl-adenylate intermediate. The polypeptide is Pantothenate synthetase (Buchnera aphidicola subsp. Acyrthosiphon pisum (strain Tuc7)).